We begin with the raw amino-acid sequence, 108 residues long: uncharacterized protein (108 aa).

Thr-56 carries the post-translational modification Phosphothreonine. Positions Ala-89–Phe-108 are disordered.

It is found in the cytoplasm. This is an uncharacterized protein from Schizosaccharomyces pombe (strain 972 / ATCC 24843) (Fission yeast).